Here is a 220-residue protein sequence, read N- to C-terminus: MASSAPPVLPISNPQTVPSAAPSSVESQPPIATPAFRNFINQITETVKNGLSKRRPWAELADRSALSKPESISDAAVRIRKNYSYFKVNYLTVATAIVGFSLVTHPFSLVFLLCLLASWLFLYLFRPTDQPIVLFGRTFSDRETLGCLILFSIFVIFLTDVGSVLVSAMMIGVALICAHGAFRAPEDLFLDEQEPAATGFLSFLGGAASSAAPAVIAARV.

The tract at residues 1–27 (MASSAPPVLPISNPQTVPSAAPSSVES) is disordered. Residues 12-27 (SNPQTVPSAAPSSVES) are compositionally biased toward polar residues. 5 helical membrane passes run 83-103 (YSYF…FSLV), 105-125 (HPFS…LYLF), 146-166 (GCLI…SVLV), 170-190 (MIGV…DLFL), and 196-216 (AATG…PAVI).

This sequence belongs to the PRA1 family. In terms of assembly, interacts with PRA1B1, PRA1B2, PRA1B3, PRA1B5, PRA1B6 and PRA1E. In terms of tissue distribution, expressed in roots, lateral roots, lateral root caps, stomata and trichomes.

The protein localises to the endosome membrane. May be involved in both secretory and endocytic intracellular trafficking in the endosomal/prevacuolar compartments. This chain is PRA1 family protein B4 (PRA1B4), found in Arabidopsis thaliana (Mouse-ear cress).